We begin with the raw amino-acid sequence, 465 residues long: UDP-N-acetylmuramate--L-alanine ligase (465 aa).

114 to 120 (GTHGKTT) contributes to the ATP binding site.

Belongs to the MurCDEF family.

Its subcellular location is the cytoplasm. The catalysed reaction is UDP-N-acetyl-alpha-D-muramate + L-alanine + ATP = UDP-N-acetyl-alpha-D-muramoyl-L-alanine + ADP + phosphate + H(+). It participates in cell wall biogenesis; peptidoglycan biosynthesis. Functionally, cell wall formation. This is UDP-N-acetylmuramate--L-alanine ligase from Chlorobium phaeobacteroides (strain BS1).